We begin with the raw amino-acid sequence, 37 residues long: Large ribosomal subunit protein bL36 (37 aa).

The protein belongs to the bacterial ribosomal protein bL36 family.

This chain is Large ribosomal subunit protein bL36, found in Halothermothrix orenii (strain H 168 / OCM 544 / DSM 9562).